The sequence spans 127 residues: MORF4 family-associated protein 1 (127 aa).

The stretch at 92–126 (RAAKRCEKAEEKAKEIAKMAEMLVELVRRIEKSES) forms a coiled coil.

Belongs to the MORF4 family-associated protein family. In terms of assembly, found in a complex composed of MORF4L1, MRFAP1 and RB1. Interacts via its N-terminus with MORF4L1. Interacts with CSTB and MORF4L2.

The protein resides in the nucleus. It localises to the cytoplasm. It is found in the perinuclear region. This Homo sapiens (Human) protein is MORF4 family-associated protein 1.